A 64-amino-acid polypeptide reads, in one-letter code: Large ribosomal subunit protein bL32 (64 aa).

It belongs to the bacterial ribosomal protein bL32 family.

This Flavobacterium psychrophilum (strain ATCC 49511 / DSM 21280 / CIP 103535 / JIP02/86) protein is Large ribosomal subunit protein bL32.